The sequence spans 142 residues: Galactose-6-phosphate isomerase subunit LacA (142 aa).

Belongs to the LacAB/RpiB family. In terms of assembly, heteromultimeric protein consisting of LacA and LacB.

The catalysed reaction is aldehydo-D-galactose 6-phosphate = keto-D-tagatose 6-phosphate. The protein operates within carbohydrate metabolism; D-galactose 6-phosphate degradation; D-tagatose 6-phosphate from D-galactose 6-phosphate: step 1/1. In Clostridium acetobutylicum (strain ATCC 824 / DSM 792 / JCM 1419 / IAM 19013 / LMG 5710 / NBRC 13948 / NRRL B-527 / VKM B-1787 / 2291 / W), this protein is Galactose-6-phosphate isomerase subunit LacA.